The primary structure comprises 226 residues: Ribonuclease 3 (226 aa).

The RNase III domain maps to Ile-6–Asn-128. Glu-41 contacts Mg(2+). Asp-45 is a catalytic residue. Asp-114 and Glu-117 together coordinate Mg(2+). Glu-117 is an active-site residue. In terms of domain architecture, DRBM spans Asp-155 to Leu-225.

This sequence belongs to the ribonuclease III family. In terms of assembly, homodimer. Mg(2+) serves as cofactor.

It localises to the cytoplasm. It carries out the reaction Endonucleolytic cleavage to 5'-phosphomonoester.. Its function is as follows. Digests double-stranded RNA. Involved in the processing of primary rRNA transcript to yield the immediate precursors to the large and small rRNAs (23S and 16S). Processes some mRNAs, and tRNAs when they are encoded in the rRNA operon. Processes pre-crRNA and tracrRNA of type II CRISPR loci if present in the organism. This is Ribonuclease 3 from Salmonella typhi.